The primary structure comprises 70 residues: Cold shock-like protein CspJ (70 aa).

Positions 7-67 constitute a CSD domain; that stretch reads GLVKWFNPEK…GPKGPSAVNV (61 aa).

The protein localises to the cytoplasm. This chain is Cold shock-like protein CspJ (cspJ), found in Salmonella typhimurium (strain SL1344).